Here is a 435-residue protein sequence, read N- to C-terminus: MRVLILGSGVIGTTSAWYLSKAGCEVVVVDRQSGAGLETSYANGGQLSFGYTSPWAAPGVPLKAVRWLFERHAPLSIRPTTDWNQYVWLARMLRHCSAERYAVNKSRMLRLSEYSREALEALSAETGITFEGRRLGTIQLFRTQQQLDGAVRDIELLTQYGIPYEVLSPHQLAKFEPGLADGSVRFVGALRLPHDQTGDCCLFTQRLAALAAKRGVEFRYGCTVQRLEVDGPRVTGAWINGALERADCCVVALGSYSPLLLAPLGLRLPVYPLKGFSLTLPMIDASRAPVSTVLDESYKVAVTRFDERIRVAGMAEVSGYDVSLNPRRRSTLEMVVQDVYPGCGDLGRGEFWTGLRPATPDGTPVIGATPYQGLFLNTGHGTLGWTMSSGSGRYLADLICCRPCEISSEGLDMFRYLVSTIPCPQECAPCVPPTP.

3-17 (VLILGSGVIGTTSAW) provides a ligand contact to FAD.

This sequence belongs to the DadA oxidoreductase family. It depends on FAD as a cofactor.

The catalysed reaction is a D-alpha-amino acid + A + H2O = a 2-oxocarboxylate + AH2 + NH4(+). The protein operates within amino-acid degradation; D-alanine degradation; NH(3) and pyruvate from D-alanine: step 1/1. In terms of biological role, oxidative deamination of D-amino acids. In Xylella fastidiosa (strain M23), this protein is D-amino acid dehydrogenase.